The sequence spans 381 residues: Lipid-A-disaccharide synthase (381 aa).

This sequence belongs to the LpxB family.

It carries out the reaction a lipid X + a UDP-2-N,3-O-bis[(3R)-3-hydroxyacyl]-alpha-D-glucosamine = a lipid A disaccharide + UDP + H(+). It functions in the pathway bacterial outer membrane biogenesis; LPS lipid A biosynthesis. Condensation of UDP-2,3-diacylglucosamine and 2,3-diacylglucosamine-1-phosphate to form lipid A disaccharide, a precursor of lipid A, a phosphorylated glycolipid that anchors the lipopolysaccharide to the outer membrane of the cell. The polypeptide is Lipid-A-disaccharide synthase (Solibacter usitatus (strain Ellin6076)).